A 310-amino-acid polypeptide reads, in one-letter code: UPF0761 membrane protein VFMJ11_0098 (310 aa).

The next 6 membrane-spanning stretches (helical) occupy residues Y34–L54, M97–D117, F136–A156, L178–V198, H207–A227, and A242–I262.

This sequence belongs to the UPF0761 family.

Its subcellular location is the cell inner membrane. The chain is UPF0761 membrane protein VFMJ11_0098 from Aliivibrio fischeri (strain MJ11) (Vibrio fischeri).